We begin with the raw amino-acid sequence, 476 residues long: Eukaryotic translation initiation factor 3 subunit L (476 aa).

The PCI domain maps to 257–452; that stretch reads DAIRMFSHIL…DLDYALENDL (196 aa).

The protein belongs to the eIF-3 subunit L family. In terms of assembly, component of the eukaryotic translation initiation factor 3 (eIF-3) complex.

The protein resides in the cytoplasm. In terms of biological role, component of the eukaryotic translation initiation factor 3 (eIF-3) complex, which is involved in protein synthesis of a specialized repertoire of mRNAs and, together with other initiation factors, stimulates binding of mRNA and methionyl-tRNAi to the 40S ribosome. The eIF-3 complex specifically targets and initiates translation of a subset of mRNAs involved in cell proliferation. The polypeptide is Eukaryotic translation initiation factor 3 subunit L (Aspergillus niger (strain ATCC MYA-4892 / CBS 513.88 / FGSC A1513)).